Reading from the N-terminus, the 147-residue chain is Large ribosomal subunit protein uL22 (147 aa).

A disordered region spans residues 110–147; that stretch reads EEKKTVAKKAPAAKKTTTTKAPAKKTTSTKKATAKKES. A compositionally biased stretch (low complexity) spans 117–140; it reads KKAPAAKKTTTTKAPAKKTTSTKK.

This sequence belongs to the universal ribosomal protein uL22 family. Part of the 50S ribosomal subunit.

Functionally, this protein binds specifically to 23S rRNA; its binding is stimulated by other ribosomal proteins, e.g. L4, L17, and L20. It is important during the early stages of 50S assembly. It makes multiple contacts with different domains of the 23S rRNA in the assembled 50S subunit and ribosome. The globular domain of the protein is located near the polypeptide exit tunnel on the outside of the subunit, while an extended beta-hairpin is found that lines the wall of the exit tunnel in the center of the 70S ribosome. The polypeptide is Large ribosomal subunit protein uL22 (Campylobacter jejuni subsp. jejuni serotype O:6 (strain 81116 / NCTC 11828)).